Reading from the N-terminus, the 54-residue chain is Conotoxin Cal6.17 (54 aa).

A signal peptide spans 1-19 (MSGTGVLLLTLLLLVTMAT). 3 disulfide bridges follow: C24/C39, C32/C49, and C38/C53.

In terms of tissue distribution, expressed by the venom duct.

It is found in the secreted. In terms of biological role, probable neurotoxin. The polypeptide is Conotoxin Cal6.17 (Californiconus californicus (California cone)).